Reading from the N-terminus, the 629-residue chain is EF-hand calcium-binding domain-containing protein 7 (629 aa).

Residues 1-25 are disordered; that stretch reads MAISPRSDATFSSQKSTPSESPRTK. A compositionally biased stretch (polar residues) spans 7-21; the sequence is SDATFSSQKSTPSES. 2 EF-hand domains span residues 102 to 137 and 138 to 173; these read TSKA…RGEK and MTRE…TNEQ. A disordered region spans residues 195–229; sequence NHIEGSPERDPSPVPKPSPKITRKTDPETFLNKGD. Residues Ser200 and Ser212 each carry the phosphoserine modification. An EF-hand 3 domain is found at 403–438; it reads EFKSTLSDIFEVIDLDGNGLLSLEEYNFFELRTSGE. Asp416, Asp418, Asn420, and Glu427 together coordinate Ca(2+).

As to quaternary structure, component of the EvC complex composed of EFCAB7, IQCE, EVC2 and EVC; built from two subcomplexes, EVC2:EVC and EFCAB7:IQCE. Interacts (via EF-hand 1 and 2) with IQCE (via N-terminus); this interaction anchors the EVC-EVC2 complex in a signaling microdomain at the base of cilia and stimulates the Hedgehog (Hh) pathway. Interacts with EVC2 (via N-terminal end). Interacts with EVC.

It localises to the cell projection. Its subcellular location is the cilium membrane. Its function is as follows. Component of the EvC complex that positively regulates ciliary Hedgehog (Hh) signaling. Required for the localization of the EVC2:EVC subcomplex at the base of primary cilia. The chain is EF-hand calcium-binding domain-containing protein 7 (EFCAB7) from Homo sapiens (Human).